Reading from the N-terminus, the 565-residue chain is CTP synthase (565 aa).

The interval methionine 1–leucine 272 is amidoligase domain. Residue serine 18 participates in CTP binding. A UTP-binding site is contributed by serine 18. Position 19 to 24 (serine 19 to isoleucine 24) interacts with ATP. L-glutamine is bound at residue tyrosine 59. Aspartate 76 is a binding site for ATP. Aspartate 76 and glutamate 146 together coordinate Mg(2+). CTP contacts are provided by residues aspartate 153–glutamate 155, lysine 193–glutamine 198, and lysine 229. UTP is bound by residues lysine 193–glutamine 198 and lysine 229. The Glutamine amidotransferase type-1 domain occupies threonine 299–glycine 543. Residue glycine 363 coordinates L-glutamine. Cysteine 390 (nucleophile; for glutamine hydrolysis) is an active-site residue. Residues leucine 391–glutamine 394, glutamate 414, and arginine 471 each bind L-glutamine. Active-site residues include histidine 516 and glutamate 518.

The protein belongs to the CTP synthase family. As to quaternary structure, homotetramer.

The catalysed reaction is UTP + L-glutamine + ATP + H2O = CTP + L-glutamate + ADP + phosphate + 2 H(+). It catalyses the reaction L-glutamine + H2O = L-glutamate + NH4(+). The enzyme catalyses UTP + NH4(+) + ATP = CTP + ADP + phosphate + 2 H(+). It functions in the pathway pyrimidine metabolism; CTP biosynthesis via de novo pathway; CTP from UDP: step 2/2. Its activity is regulated as follows. Allosterically activated by GTP, when glutamine is the substrate; GTP has no effect on the reaction when ammonia is the substrate. The allosteric effector GTP functions by stabilizing the protein conformation that binds the tetrahedral intermediate(s) formed during glutamine hydrolysis. Inhibited by the product CTP, via allosteric rather than competitive inhibition. Its function is as follows. Catalyzes the ATP-dependent amination of UTP to CTP with either L-glutamine or ammonia as the source of nitrogen. Regulates intracellular CTP levels through interactions with the four ribonucleotide triphosphates. The chain is CTP synthase from Pelodictyon phaeoclathratiforme (strain DSM 5477 / BU-1).